Consider the following 262-residue polypeptide: 5'-nucleotidase SurE (262 aa).

Aspartate 8, aspartate 9, serine 39, and asparagine 95 together coordinate a divalent metal cation.

This sequence belongs to the SurE nucleotidase family. A divalent metal cation serves as cofactor.

The protein resides in the cytoplasm. The enzyme catalyses a ribonucleoside 5'-phosphate + H2O = a ribonucleoside + phosphate. In terms of biological role, nucleotidase that shows phosphatase activity on nucleoside 5'-monophosphates. The chain is 5'-nucleotidase SurE from Methanothermobacter thermautotrophicus (strain ATCC 29096 / DSM 1053 / JCM 10044 / NBRC 100330 / Delta H) (Methanobacterium thermoautotrophicum).